Consider the following 312-residue polypeptide: HPr kinase/phosphorylase (312 aa).

Catalysis depends on residues His141 and Lys162. Residue 156-163 (GDSGIGKS) coordinates ATP. Ser163 serves as a coordination point for Mg(2+). The active-site Proton acceptor; for phosphorylation activity. Proton donor; for dephosphorylation activity is the Asp180. An important for the catalytic mechanism of both phosphorylation and dephosphorylation region spans residues 204-213 (LEIRGVGIID). Glu205 provides a ligand contact to Mg(2+). Arg246 is an active-site residue. The important for the catalytic mechanism of dephosphorylation stretch occupies residues 267 to 272 (PVRVGR).

This sequence belongs to the HPrK/P family. Homohexamer. It depends on Mg(2+) as a cofactor.

The catalysed reaction is [HPr protein]-L-serine + ATP = [HPr protein]-O-phospho-L-serine + ADP + H(+). The enzyme catalyses [HPr protein]-O-phospho-L-serine + phosphate + H(+) = [HPr protein]-L-serine + diphosphate. In terms of biological role, catalyzes the ATP- as well as the pyrophosphate-dependent phosphorylation of a specific serine residue in HPr, a phosphocarrier protein of the phosphoenolpyruvate-dependent sugar phosphotransferase system (PTS). HprK/P also catalyzes the pyrophosphate-producing, inorganic phosphate-dependent dephosphorylation (phosphorolysis) of seryl-phosphorylated HPr (P-Ser-HPr). The two antagonistic activities of HprK/P are regulated by several intracellular metabolites, which change their concentration in response to the absence or presence of rapidly metabolisable carbon sources (glucose, fructose, etc.) in the growth medium. Therefore, by controlling the phosphorylation state of HPr, HPrK/P is a sensor enzyme that plays a major role in the regulation of carbon metabolism and sugar transport: it mediates carbon catabolite repression (CCR), and regulates PTS-catalyzed carbohydrate uptake and inducer exclusion. The chain is HPr kinase/phosphorylase from Pediococcus pentosaceus (strain ATCC 25745 / CCUG 21536 / LMG 10740 / 183-1w).